The chain runs to 168 residues: MNELTSRLNRERRFLVLLGVICLALIGGALYMQVVLGEAPCPLCILQRYALLFIAIFAFIAAAMPGRKSLTFFEVLVVLSAIGGIVAAGNHVYILANPMVSCGIDTLQPIVDDLPLAKLWPLAFQVDGFCSTPYPPILGLSLAQWALVAFVLTTVLVPLGIYRNRRRG.

Residues 1–14 (MNELTSRLNRERRF) are Cytoplasmic-facing. Residues 15 to 31 (LVLLGVICLALIGGALY) traverse the membrane as a helical segment. Residues 32–49 (MQVVLGEAPCPLCILQRY) lie on the Periplasmic side of the membrane. An intrachain disulfide couples Cys-41 to Cys-44. Residues 50-65 (ALLFIAIFAFIAAAMP) traverse the membrane as a helical segment. At 66–72 (GRKSLTF) the chain is on the cytoplasmic side. A helical membrane pass occupies residues 73–89 (FEVLVVLSAIGGIVAAG). Topologically, residues 90-144 (NHVYILANPMVSCGIDTLQPIVDDLPLAKLWPLAFQVDGFCSTPYPPILGLSLAQ) are periplasmic. Residues Cys-102 and Cys-130 are joined by a disulfide bond. The chain crosses the membrane as a helical span at residues 145-163 (WALVAFVLTTVLVPLGIYR). At 164–168 (NRRRG) the chain is on the cytoplasmic side.

It belongs to the DsbB family.

The protein resides in the cell inner membrane. In terms of biological role, required for disulfide bond formation in some periplasmic proteins. Acts by oxidizing the DsbA protein. This chain is Disulfide bond formation protein B 1, found in Pseudomonas entomophila (strain L48).